We begin with the raw amino-acid sequence, 70 residues long: Mu-agatoxin-Ao1b (70 aa).

A signal peptide spans 1-20; that stretch reads MKAIIFFCFLSVMVFIVAEA. The propeptide occupies 21–33; that stretch reads SSLEALKIFEGER. Cystine bridges form between Cys35-Cys50, Cys42-Cys55, Cys49-Cys65, and Cys57-Cys63. Asn69 is subject to Asparagine amide.

It belongs to the neurotoxin 07 (Beta/delta-agtx) family. 04 (aga-5) subfamily. In terms of tissue distribution, expressed by the venom gland.

Its subcellular location is the secreted. In terms of biological role, insecticidal neurotoxin that modulates the insect Nav channel (DmNaV1/tipE (para/tipE)) in a unique manner, with both the activation and inactivation processes being affected. The voltage dependence of activation is shifted toward more hyperpolarized potentials (analogous to site 4 toxins) and a non-inactivating persistent sodium current is induced (site 3-like action). Interestingly, both effects take place in a voltage-dependent manner, producing a bell-shaped curve between -80 and 0 mV. The protein is Mu-agatoxin-Ao1b of Agelena orientalis (Funnel-web spider).